A 442-amino-acid polypeptide reads, in one-letter code: FBD-associated F-box protein At1g66310 (442 aa).

An F-box domain is found at 18–64; the sequence is VDWLRDLPESLLCHILLNLPTKDVVKTSVLSSKWRNLWRLVPGLDLD. Residues 363 to 415 enclose the FBD domain; sequence KRRTSVLSGPRRLLSSLEYVEIESPLTGEVFEMKLVSYLLENSPILKKLTINL.

This is FBD-associated F-box protein At1g66310 from Arabidopsis thaliana (Mouse-ear cress).